Reading from the N-terminus, the 553-residue chain is Putative transport protein YidE (553 aa).

5 consecutive transmembrane segments (helical) span residues 4-24, 28-48, 65-85, 95-115, and 158-178; these read IALT…IGNV, GVGL…HFVS, FGLI…FFAS, LFAV…HKLF, and MSYA…MWML. RCK C-terminal domains are found at residues 191-276 and 279-361; these read QQHE…VIGQ and DTSL…VLGN. The next 6 membrane-spanning stretches (helical) occupy residues 371-391, 393-413, 439-459, 464-484, 493-513, and 533-553; these read MLPV…PVFV, GFPA…ALIL, IVLF…HTLV, LSWI…VGIL, YLTM…LAFA, and LVMF…WSIG.

The protein belongs to the AAE transporter (TC 2.A.81) family. YidE subfamily.

Its subcellular location is the cell membrane. The sequence is that of Putative transport protein YidE from Escherichia coli O127:H6 (strain E2348/69 / EPEC).